We begin with the raw amino-acid sequence, 313 residues long: tRNA dimethylallyltransferase (313 aa).

9–16 (GPTASGKT) is an ATP binding site. Substrate is bound at residue 11–16 (TASGKT). Residues 34–37 (DSMQ) form an interaction with substrate tRNA region.

This sequence belongs to the IPP transferase family. In terms of assembly, monomer. Requires Mg(2+) as cofactor.

The catalysed reaction is adenosine(37) in tRNA + dimethylallyl diphosphate = N(6)-dimethylallyladenosine(37) in tRNA + diphosphate. In terms of biological role, catalyzes the transfer of a dimethylallyl group onto the adenine at position 37 in tRNAs that read codons beginning with uridine, leading to the formation of N6-(dimethylallyl)adenosine (i(6)A). The protein is tRNA dimethylallyltransferase of Acetivibrio thermocellus (strain ATCC 27405 / DSM 1237 / JCM 9322 / NBRC 103400 / NCIMB 10682 / NRRL B-4536 / VPI 7372) (Clostridium thermocellum).